A 704-amino-acid polypeptide reads, in one-letter code: Elongation factor G (704 aa).

The region spanning 10 to 290 (KKVRNIGIMA…AVVDYLPSPL (281 aa)) is the tr-type G domain. Residues 19 to 26 (AHIDAGKT), 83 to 87 (DTPGH), and 137 to 140 (NKMD) each bind GTP.

Belongs to the TRAFAC class translation factor GTPase superfamily. Classic translation factor GTPase family. EF-G/EF-2 subfamily.

The protein localises to the cytoplasm. In terms of biological role, catalyzes the GTP-dependent ribosomal translocation step during translation elongation. During this step, the ribosome changes from the pre-translocational (PRE) to the post-translocational (POST) state as the newly formed A-site-bound peptidyl-tRNA and P-site-bound deacylated tRNA move to the P and E sites, respectively. Catalyzes the coordinated movement of the two tRNA molecules, the mRNA and conformational changes in the ribosome. The protein is Elongation factor G of Kocuria rhizophila (strain ATCC 9341 / DSM 348 / NBRC 103217 / DC2201).